Here is a 157-residue protein sequence, read N- to C-terminus: Protein Smg (157 aa).

The protein belongs to the Smg family.

The sequence is that of Protein Smg from Salmonella agona (strain SL483).